The chain runs to 23 residues: Paralytic peptide 1 (23 aa).

An intrachain disulfide couples C7 to C19.

The protein belongs to the GBP/PSP1/paralytic peptide family. In terms of tissue distribution, hemolymph.

Causes rapid, rigid paralysis when injected into Lepidopteran larvae. The physiological role may be to reduce hemolymph loss following injury and promote wound healing. This is Paralytic peptide 1 from Heliothis virescens (Tobacco budworm moth).